The following is a 215-amino-acid chain: NAD(P)H-hydrate epimerase (215 aa).

Positions 10-212 constitute a YjeF N-terminal domain; it reads SRELDDKTIN…DIGIYRGNAF (203 aa). Residue 59-63 coordinates (6S)-NADPHX; the sequence is NNGGD. Residues asparagine 60 and aspartate 122 each contribute to the K(+) site. (6S)-NADPHX contacts are provided by residues 126-132 and aspartate 155; that span reads GSGLSRN. Serine 158 serves as a coordination point for K(+).

The protein belongs to the NnrE/AIBP family. K(+) serves as cofactor.

The enzyme catalyses (6R)-NADHX = (6S)-NADHX. The catalysed reaction is (6R)-NADPHX = (6S)-NADPHX. Its function is as follows. Catalyzes the epimerization of the S- and R-forms of NAD(P)HX, a damaged form of NAD(P)H that is a result of enzymatic or heat-dependent hydration. This is a prerequisite for the S-specific NAD(P)H-hydrate dehydratase to allow the repair of both epimers of NAD(P)HX. The protein is NAD(P)H-hydrate epimerase of Lentilactobacillus buchneri (strain NRRL B-30929) (Lactobacillus buchneri).